The following is a 299-amino-acid chain: MATLLATRGNRATWRDYLELTKPKVVVLMLITSLVGMFLASRAGVPWTVLLFGNLGIGLCAGAAAAVNHVVDRRIDALMARTRRRPLAEGRVAPLAALGFALALAVAGMALLLTFTNPLAAWLTLASLLGYAVLYTGFLKRATPQNIVIGGLAGAAPPLLGWVAVSGQLSAEPLLLVLIVFTWTPPHFWALAIHRKAEYAKAEIPMLPVTHGEAYTKLHILLYTLALLAVTLLPYAIHMSGPLYLLCALLLGGRFLHWAWALYKDSKPHAAIGTFKYSIRYLFLLFIALLVDHYLPLTL.

The next 9 helical transmembrane spans lie at 25–45, 47–67, 95–115, 119–139, 147–167, 173–193, 218–238, 243–263, and 279–299; these read VVVL…RAGV, WTVL…AAAV, LAAL…LLTF, LAAW…TGFL, IVIG…AVSG, PLLL…ALAI, LHIL…YAIH, LYLL…WALY, and IRYL…PLTL.

The protein belongs to the UbiA prenyltransferase family. Protoheme IX farnesyltransferase subfamily.

Its subcellular location is the cell inner membrane. It catalyses the reaction heme b + (2E,6E)-farnesyl diphosphate + H2O = Fe(II)-heme o + diphosphate. It functions in the pathway porphyrin-containing compound metabolism; heme O biosynthesis; heme O from protoheme: step 1/1. In terms of biological role, converts heme B (protoheme IX) to heme O by substitution of the vinyl group on carbon 2 of heme B porphyrin ring with a hydroxyethyl farnesyl side group. This Azotobacter vinelandii (strain DJ / ATCC BAA-1303) protein is Protoheme IX farnesyltransferase.